Here is a 127-residue protein sequence, read N- to C-terminus: Small ribosomal subunit protein bS6 (127 aa).

The interval 101–127 (PMMKEEKARDLLQGAKADAPAEQPAAA) is disordered. Over residues 115–127 (AKADAPAEQPAAA) the composition is skewed to low complexity.

This sequence belongs to the bacterial ribosomal protein bS6 family.

Functionally, binds together with bS18 to 16S ribosomal RNA. The sequence is that of Small ribosomal subunit protein bS6 from Thiobacillus denitrificans (strain ATCC 25259 / T1).